We begin with the raw amino-acid sequence, 732 residues long: Probable ATP-dependent RNA helicase DHX35 homolog (732 aa).

Residues 1 to 50 are disordered; the sequence is MSYHPGHGHRQEPRKGAGARRGFARPDDSADAPRTGPLIFEERSTENAGA. Positions 87-251 constitute a Helicase ATP-binding domain; it reads LYMCERYRTI…FEMNETGNSD (165 aa). ATP is bound at residue 100-107; the sequence is GETGCGKS. The DEAH box motif lies at 198-201; that stretch reads DEAH. In terms of domain architecture, Helicase C-terminal spans 283-457; that stretch reads AVDTVINIHK…STILQLKALG (175 aa).

This sequence belongs to the DEAD box helicase family. DEAH subfamily.

It catalyses the reaction ATP + H2O = ADP + phosphate + H(+). This chain is Probable ATP-dependent RNA helicase DHX35 homolog, found in Caenorhabditis elegans.